Consider the following 151-residue polypeptide: Cell division control protein 2 homolog 2 (151 aa).

The 151-residue stretch at 1 to 151 (ALKEIRMDNE…IMQTLQIESL (151 aa)) folds into the Protein kinase domain. Lysine 3 provides a ligand contact to ATP. The active-site Proton acceptor is the aspartate 113.

This sequence belongs to the protein kinase superfamily. CMGC Ser/Thr protein kinase family. CDC2/CDKX subfamily.

It carries out the reaction L-seryl-[protein] + ATP = O-phospho-L-seryl-[protein] + ADP + H(+). The catalysed reaction is L-threonyl-[protein] + ATP = O-phospho-L-threonyl-[protein] + ADP + H(+). It catalyses the reaction [DNA-directed RNA polymerase] + ATP = phospho-[DNA-directed RNA polymerase] + ADP + H(+). The chain is Cell division control protein 2 homolog 2 from Pisum sativum (Garden pea).